The primary structure comprises 426 residues: MLDSKLLRGQLQEVADRLASRGFSLDVARIESLEERRKAVQTRTEQLQAERNARSKSIGQAKAKGEDIAPLMADVERMANELAAGKAELDAIQAELDGILLTIPNLPDASVPVGASEDDNVEVRRWGTPKAFDFEIKDHVALGEISGGLDFEAAAKLSGARFAVLRGPVARLHRALAQFMINLHTGEHGYEEHYTPYMVQAPALQGTGQLPKFEEDLFKITREGEADFYLIPTAEVSLTNLVAGEILDAKQLPLKLVAHTPCFRSEAGASGRDTRGMIRQHQFDKVEMVQVVEPSKSMEALEGLTANAERVLQLLELPYRVLALCTGDMGFGAVKTYDLEVWVPSQDKYREISSCSNCGDFQARRMQARWRNPETGKPELVHTLNGSGLAVGRTLVAVLENYQQADGSILVPEVLKPYMGGVEVIR.

233-235 (TAE) lines the L-serine pocket. 264 to 266 (RSE) contacts ATP. Glu287 is a binding site for L-serine. 351 to 354 (EISS) contributes to the ATP binding site. Position 387 (Ser387) interacts with L-serine.

This sequence belongs to the class-II aminoacyl-tRNA synthetase family. Type-1 seryl-tRNA synthetase subfamily. As to quaternary structure, homodimer. The tRNA molecule binds across the dimer.

It localises to the cytoplasm. It carries out the reaction tRNA(Ser) + L-serine + ATP = L-seryl-tRNA(Ser) + AMP + diphosphate + H(+). The catalysed reaction is tRNA(Sec) + L-serine + ATP = L-seryl-tRNA(Sec) + AMP + diphosphate + H(+). Its pathway is aminoacyl-tRNA biosynthesis; selenocysteinyl-tRNA(Sec) biosynthesis; L-seryl-tRNA(Sec) from L-serine and tRNA(Sec): step 1/1. Its function is as follows. Catalyzes the attachment of serine to tRNA(Ser). Is also able to aminoacylate tRNA(Sec) with serine, to form the misacylated tRNA L-seryl-tRNA(Sec), which will be further converted into selenocysteinyl-tRNA(Sec). This chain is Serine--tRNA ligase, found in Pseudomonas putida (strain ATCC 47054 / DSM 6125 / CFBP 8728 / NCIMB 11950 / KT2440).